A 704-amino-acid polypeptide reads, in one-letter code: MFLFSDGLQSINNNNRRKRIVKNAYIPSRGIRKIPHLSTLLPEFHIYKDGKGAEAVVGWGLRPTTHKARAFATEHQLPFIALEDGFLRSLGLGVSGYPPYSIVYDDIGIYYDTTRPSRLEQLILAADTMPSETLAQARQAMDFILQHHLSKYNHAPELSDDHPLRSPSKSETVLIIDQTFGDMAIQYGGADASTFELMFQTALNENPQADIWVKTHPDVLCGKKQGYLTQLVQQHRVHLLAEDINPISLLQNVDKVYCVTSQMGFEALLCGKPLTTFGLPWYAGWGVSDDRHPKIGSLIQTQRRAPRNLLQLFAAAYLQYSRYLNPNTGEAGSLFDVIDYLATVKRKNDKLRGELYCVGMSLWKRAVAKPFFNVPSCRLKFISSTQKLARVKLSDDARILAWGNGKEAIVRFAEQHHIPLLRMEDGFIRSVGLGSNLVPPLSLVTDDMSIYFNAETPSRLEYILQNQNFDDQDFQTALKLQKMLTENHISKYNVGSSDFTAPSTDKTVILVPGQVEDDASIRYGSPQIYRNLDLLRTVRERNPNAYIIYKPHPDVVSGNRIGHISPDDAARYADQTAEQADILTCLQYADEIHTMTSLTGFEALLRGKKVSCYGLPFYAGWGLTQDLLPIPRRSRRLELWQLVAGTLIYYPDYIHPKTHQAINAETAAQILIRQKNMQKNNNGLHRGCFAKKLGKIKQLYRSFK.

The protein localises to the cell inner membrane. Functionally, involved in the phospholipid modification of the capsular polysaccharide, a strong requirement for its translocation to the cell surface. This Neisseria meningitidis serogroup A / serotype 4A (strain DSM 15465 / Z2491) protein is Capsule polysaccharide modification protein LipA (lipA).